We begin with the raw amino-acid sequence, 419 residues long: Tol-Pal system protein TolB (419 aa).

The N-terminal stretch at 1–19 (MCNRIISLFLLLFTGQVIA) is a signal peptide.

It belongs to the TolB family. In terms of assembly, the Tol-Pal system is composed of five core proteins: the inner membrane proteins TolA, TolQ and TolR, the periplasmic protein TolB and the outer membrane protein Pal. They form a network linking the inner and outer membranes and the peptidoglycan layer.

The protein localises to the periplasm. Its function is as follows. Part of the Tol-Pal system, which plays a role in outer membrane invagination during cell division and is important for maintaining outer membrane integrity. The polypeptide is Tol-Pal system protein TolB (Legionella pneumophila (strain Paris)).